The following is a 200-amino-acid chain: ATP-dependent Clp protease proteolytic subunit 3 (200 aa).

The Nucleophile role is filled by serine 101. The active site involves histidine 126.

Belongs to the peptidase S14 family. In terms of assembly, fourteen ClpP subunits assemble into 2 heptameric rings which stack back to back to give a disk-like structure with a central cavity, resembling the structure of eukaryotic proteasomes.

Its subcellular location is the cytoplasm. The enzyme catalyses Hydrolysis of proteins to small peptides in the presence of ATP and magnesium. alpha-casein is the usual test substrate. In the absence of ATP, only oligopeptides shorter than five residues are hydrolyzed (such as succinyl-Leu-Tyr-|-NHMec, and Leu-Tyr-Leu-|-Tyr-Trp, in which cleavage of the -Tyr-|-Leu- and -Tyr-|-Trp bonds also occurs).. In terms of biological role, cleaves peptides in various proteins in a process that requires ATP hydrolysis. Has a chymotrypsin-like activity. Plays a major role in the degradation of misfolded proteins. This is ATP-dependent Clp protease proteolytic subunit 3 from Parasynechococcus marenigrum (strain WH8102).